Here is a 404-residue protein sequence, read N- to C-terminus: Argininosuccinate synthase (404 aa).

ATP contacts are provided by residues 10–18 and Ala38; that span reads AYSGGVDTS. Tyr89 is a binding site for L-citrulline. Gly119 lines the ATP pocket. L-aspartate contacts are provided by Thr121, Asn125, and Asp126. Asn125 lines the L-citrulline pocket. L-citrulline contacts are provided by Arg129, Ser177, Ser186, Glu262, and Tyr274.

Belongs to the argininosuccinate synthase family. Type 1 subfamily. In terms of assembly, homotetramer.

The protein resides in the cytoplasm. The enzyme catalyses L-citrulline + L-aspartate + ATP = 2-(N(omega)-L-arginino)succinate + AMP + diphosphate + H(+). Its pathway is amino-acid biosynthesis; L-arginine biosynthesis; L-arginine from L-ornithine and carbamoyl phosphate: step 2/3. The protein is Argininosuccinate synthase of Prochlorococcus marinus (strain MIT 9515).